A 381-amino-acid polypeptide reads, in one-letter code: ELMO domain-containing protein 3 (381 aa).

The segment at 1 to 31 (MNEKSCSFHSKEELRDGQGERLSAGYSPSYD) is disordered. Basic and acidic residues predominate over residues 9 to 19 (HSKEELRDGQG). The 155-residue stretch at 170-324 (VHGRVLQTIY…ELEVLAKKSP (155 aa)) folds into the ELMO domain.

Both isoform 1 and isoform 6 are widely expressed.

It is found in the cell projection. The protein resides in the stereocilium. It localises to the kinocilium. The protein localises to the cytoplasm. Its subcellular location is the cytoskeleton. Its function is as follows. Acts as a GTPase-activating protein (GAP) for ARL2 with low specific activity. This is ELMO domain-containing protein 3 (ELMOD3) from Homo sapiens (Human).